The primary structure comprises 654 residues: Fructose-1,6-bisphosphatase class 3 (654 aa).

The disordered stretch occupies residues 288-307 (NPAFKPKKRPDKHERLTQRE). Basic and acidic residues predominate over residues 298 to 307 (DKHERLTQRE).

The protein belongs to the FBPase class 3 family. It depends on Mn(2+) as a cofactor.

The catalysed reaction is beta-D-fructose 1,6-bisphosphate + H2O = beta-D-fructose 6-phosphate + phosphate. Its pathway is carbohydrate biosynthesis; gluconeogenesis. This chain is Fructose-1,6-bisphosphatase class 3, found in Staphylococcus aureus (strain USA300).